The chain runs to 167 residues: NADH-quinone oxidoreductase subunit B (167 aa).

Cys-40, Cys-41, Cys-105, and Cys-134 together coordinate [4Fe-4S] cluster.

It belongs to the complex I 20 kDa subunit family. As to quaternary structure, NDH-1 is composed of 14 different subunits. Subunits NuoB, C, D, E, F, and G constitute the peripheral sector of the complex. [4Fe-4S] cluster is required as a cofactor.

It localises to the cell inner membrane. The catalysed reaction is a quinone + NADH + 5 H(+)(in) = a quinol + NAD(+) + 4 H(+)(out). Functionally, NDH-1 shuttles electrons from NADH, via FMN and iron-sulfur (Fe-S) centers, to quinones in the respiratory chain. The immediate electron acceptor for the enzyme in this species is believed to be ubiquinone. Couples the redox reaction to proton translocation (for every two electrons transferred, four hydrogen ions are translocated across the cytoplasmic membrane), and thus conserves the redox energy in a proton gradient. This is NADH-quinone oxidoreductase subunit B from Campylobacter jejuni (strain RM1221).